Here is a 388-residue protein sequence, read N- to C-terminus: Phosphopentomutase (388 aa).

Mn(2+)-binding residues include D11, D283, H288, D324, H325, and H336.

Belongs to the phosphopentomutase family. Requires Mn(2+) as cofactor.

It is found in the cytoplasm. It carries out the reaction 2-deoxy-alpha-D-ribose 1-phosphate = 2-deoxy-D-ribose 5-phosphate. It catalyses the reaction alpha-D-ribose 1-phosphate = D-ribose 5-phosphate. It participates in carbohydrate degradation; 2-deoxy-D-ribose 1-phosphate degradation; D-glyceraldehyde 3-phosphate and acetaldehyde from 2-deoxy-alpha-D-ribose 1-phosphate: step 1/2. Its function is as follows. Isomerase that catalyzes the conversion of deoxy-ribose 1-phosphate (dRib-1-P) and ribose 1-phosphate (Rib-1-P) to deoxy-ribose 5-phosphate (dRib-5-P) and ribose 5-phosphate (Rib-5-P), respectively. This chain is Phosphopentomutase, found in Enterococcus faecalis (strain ATCC 700802 / V583).